Here is an 81-residue protein sequence, read N- to C-terminus: MSHSVKIYDTCIGCTQCVRACPLDVLEMVPWDGNKAGTIASSPRTEDCVGCKRCETACPTDFLSIRVYLGAETTRSMGLAY.

4Fe-4S ferredoxin-type domains follow at residues 2–31 and 39–68; these read SHSV…MVPW and IASS…IRVY. 8 residues coordinate [4Fe-4S] cluster: C11, C14, C17, C21, C48, C51, C54, and C58.

In terms of assembly, the G.violaceus PSI reaction center is composed of one copy each of PsaA,B,C,D,E,F,L,M and Z, and forms trimeric complexes. The cofactor is [4Fe-4S] cluster.

It localises to the cell inner membrane. It catalyses the reaction reduced [plastocyanin] + hnu + oxidized [2Fe-2S]-[ferredoxin] = oxidized [plastocyanin] + reduced [2Fe-2S]-[ferredoxin]. Its function is as follows. Apoprotein for the two 4Fe-4S centers FA and FB of photosystem I (PSI); essential for photochemical activity. FB is the terminal electron acceptor of PSI, donating electrons to ferredoxin. The C-terminus interacts with PsaA/B/D and helps assemble the protein into the PSI complex. Required for binding of PsaD and PsaE to PSI. PSI is a plastocyanin/cytochrome c6-ferredoxin oxidoreductase, converting photonic excitation into a charge separation, which transfers an electron from the donor P700 chlorophyll pair to the spectroscopically characterized acceptors A0, A1, FX, FA and FB in turn. The sequence is that of Photosystem I iron-sulfur center from Gloeobacter violaceus (strain ATCC 29082 / PCC 7421).